Consider the following 138-residue polypeptide: Nucleoside diphosphate kinase (138 aa).

Residues K9, F57, R85, T91, R102, and N112 each coordinate ATP. Catalysis depends on H115, which acts as the Pros-phosphohistidine intermediate.

It belongs to the NDK family. Homotetramer. Requires Mg(2+) as cofactor.

The protein resides in the cytoplasm. It catalyses the reaction a 2'-deoxyribonucleoside 5'-diphosphate + ATP = a 2'-deoxyribonucleoside 5'-triphosphate + ADP. The enzyme catalyses a ribonucleoside 5'-diphosphate + ATP = a ribonucleoside 5'-triphosphate + ADP. Major role in the synthesis of nucleoside triphosphates other than ATP. The ATP gamma phosphate is transferred to the NDP beta phosphate via a ping-pong mechanism, using a phosphorylated active-site intermediate. The sequence is that of Nucleoside diphosphate kinase from Desulforapulum autotrophicum (strain ATCC 43914 / DSM 3382 / VKM B-1955 / HRM2) (Desulfobacterium autotrophicum).